Here is a 137-residue protein sequence, read N- to C-terminus: Holo-[acyl-carrier-protein] synthase (137 aa).

2 residues coordinate Mg(2+): aspartate 8 and glutamate 57.

This sequence belongs to the P-Pant transferase superfamily. AcpS family. The cofactor is Mg(2+).

It is found in the cytoplasm. The catalysed reaction is apo-[ACP] + CoA = holo-[ACP] + adenosine 3',5'-bisphosphate + H(+). Its function is as follows. Transfers the 4'-phosphopantetheine moiety from coenzyme A to a Ser of acyl-carrier-protein. The chain is Holo-[acyl-carrier-protein] synthase from Mesorhizobium japonicum (strain LMG 29417 / CECT 9101 / MAFF 303099) (Mesorhizobium loti (strain MAFF 303099)).